The primary structure comprises 245 residues: Derlin-1 (245 aa).

The Cytoplasmic segment spans residues 1–17; it reads MDAGVWYRSLPRFTRYW. Residues 18–38 traverse the membrane as a helical segment; that stretch reads LTATVVLSMLCRFDVIPLHWL. At 39-58 the chain is on the lumenal side; it reads HLDRSAVFSKLQLWRCMTSL. The chain crosses the membrane as a helical span at residues 59 to 79; that stretch reads FVFPISSNTAFHFLINCFFIV. The Cytoplasmic portion of the chain corresponds to 80–99; it reads QYSSKLEKDQYSRSPADYLY. A helical membrane pass occupies residues 100 to 120; sequence LLIVSAVLANIGGMIFNVYFL. The Lumenal segment spans residues 121–156; it reads MDTLVLAITYIWCQLNKDVTVSFWFGTRFKAMYLPW. A helical membrane pass occupies residues 157–177; the sequence is VLAAFEFIFHFSLASLVGIFV. Topologically, residues 178–245 are cytoplasmic; that stretch reads GHVYYFFKFQ…WGRGMTLGRN (68 aa). The disordered stretch occupies residues 218 to 245; the sequence is FGLPPESRAPPRQATESPWGRGMTLGRN.

Belongs to the derlin family.

It localises to the endoplasmic reticulum membrane. Its function is as follows. May be involved in the degradation process of specific misfolded endoplasmic reticulum (ER) luminal proteins. May also involved in endoplasmic reticulum stress-induced pre-emptive quality control, a mechanism that selectively attenuates the translocation of newly synthesized proteins into the endoplasmic reticulum and reroutes them to the cytosol for proteasomal degradation. The chain is Derlin-1 from Drosophila melanogaster (Fruit fly).